The primary structure comprises 146 residues: Hemoglobin subunit beta-1/2 (146 aa).

Valine 1 is modified (N-acetylvaline). Residues 2–146 (HLTGEEKSGL…VANALAHKYH (145 aa)) enclose the Globin domain. At threonine 12 the chain carries Phosphothreonine. Lysine 59 bears the N6-acetyllysine mark. Histidine 63 is a heme b binding site. N6-acetyllysine is present on lysine 82. Histidine 92 is a binding site for heme b. Cysteine 93 carries the post-translational modification S-nitrosocysteine. Lysine 144 is subject to N6-acetyllysine.

It belongs to the globin family. As to quaternary structure, heterotetramer of two alpha chains and two beta chains. Red blood cells.

Involved in oxygen transport from the lung to the various peripheral tissues. This is Hemoglobin subunit beta-1/2 (HBB) from Physeter macrocephalus (Sperm whale).